Here is a 283-residue protein sequence, read N- to C-terminus: Shikimate kinase (283 aa).

Residue 86–96 coordinates ATP; that stretch reads PLKSGLSSSSA.

It belongs to the GHMP kinase family. Archaeal shikimate kinase subfamily.

It is found in the cytoplasm. The catalysed reaction is shikimate + ATP = 3-phosphoshikimate + ADP + H(+). The protein operates within metabolic intermediate biosynthesis; chorismate biosynthesis; chorismate from D-erythrose 4-phosphate and phosphoenolpyruvate: step 5/7. This chain is Shikimate kinase, found in Methanococcus vannielii (strain ATCC 35089 / DSM 1224 / JCM 13029 / OCM 148 / SB).